The chain runs to 207 residues: Inhibitor of hydrogen peroxide resistance (207 aa).

Positions 163–182 (MNYIHQRTRISRSVVAEVLA) form a DNA-binding region, H-T-H motif.

The protein belongs to the IprA family.

In terms of biological role, involved in oxidative stress resistance. The sequence is that of Inhibitor of hydrogen peroxide resistance from Escherichia coli O157:H7.